The following is a 226-amino-acid chain: Gap junction beta-2 protein (226 aa).

Residues 2-13 (DWGALQTILGGV) lie within the membrane without spanning it. At 14 to 20 (NKHSTSI) the chain is on the cytoplasmic side. Residues 21–40 (GKIWLTVLFIFRIMILVVAA) traverse the membrane as a helical segment. Over 41–73 (KEVWGDEQADFVCNTLQPGCKNVCYDHYFPISH) the chain is Extracellular. Positions 42, 45, and 47 each coordinate Ca(2+). 3 cysteine pairs are disulfide-bonded: C53–C180, C60–C174, and C64–C169. A helical transmembrane segment spans residues 74–94 (IRLWALQLIFVSTPALLVAMH). Residues 95-135 (VAYRRHEKKRKFIKGEIKSEFKDIEEIKTQKVRIEGSLWWT) lie on the Cytoplasmic side of the membrane. Residues 136–156 (YTSSIFFRVIFEAAFMYVFYV) form a helical membrane-spanning segment. At 157–189 (MYDGFSMQRLVKCNAWPCPNTVDCFVSRPTEKT) the chain is on the extracellular side. A helical transmembrane segment spans residues 190–210 (VFTVFMIAVSGICILLNVTEL). The Cytoplasmic portion of the chain corresponds to 211–226 (CYLLIRYCSGRSKKPV).

This sequence belongs to the connexin family. Beta-type (group I) subfamily. As to quaternary structure, a hemichannel or connexon is composed of a hexamer of connexins. A functional gap junction is formed by the apposition of two hemichannels. Forms heteromeric channels with GJB4. Interacts with CNST.

It is found in the cell membrane. It localises to the cell junction. The protein resides in the gap junction. In terms of biological role, structural component of gap junctions. Gap junctions are dodecameric channels that connect the cytoplasm of adjoining cells. They are formed by the docking of two hexameric hemichannels, one from each cell membrane. Small molecules and ions diffuse from one cell to a neighboring cell via the central pore. The protein is Gap junction beta-2 protein (GJB2) of Pongo pygmaeus (Bornean orangutan).